Here is a 129-residue protein sequence, read N- to C-terminus: MSVDTLSNAMIAIKNAEMVGEKKCEIKPASKLIGNVLKVMKDYGYIKGFEYVENHRGGKFIVELSGNINDCGAIRPRFSSSVTEYEMYEKRYLPARDFGILIVSTTKGVMSQKDARKQRLGGVLLAYVY.

The protein belongs to the universal ribosomal protein uS8 family. In terms of assembly, part of the 30S ribosomal subunit.

In terms of biological role, one of the primary rRNA binding proteins, it binds directly to 16S rRNA central domain where it helps coordinate assembly of the platform of the 30S subunit. The sequence is that of Small ribosomal subunit protein uS8 from Archaeoglobus fulgidus (strain ATCC 49558 / DSM 4304 / JCM 9628 / NBRC 100126 / VC-16).